The following is a 259-amino-acid chain: Adenosylcobinamide-GDP ribazoletransferase (259 aa).

6 helical membrane passes run 37 to 57 (ASRY…LVYS), 58 to 78 (VMLH…ASVL), 118 to 138 (ALAL…LALF), 143 to 163 (VSLA…SFIF), 195 to 215 (AAIS…LGLL), and 237 to 257 (LGAT…IVGA).

This sequence belongs to the CobS family. Requires Mg(2+) as cofactor.

It localises to the cell inner membrane. The enzyme catalyses alpha-ribazole + adenosylcob(III)inamide-GDP = adenosylcob(III)alamin + GMP + H(+). It carries out the reaction alpha-ribazole 5'-phosphate + adenosylcob(III)inamide-GDP = adenosylcob(III)alamin 5'-phosphate + GMP + H(+). Its pathway is cofactor biosynthesis; adenosylcobalamin biosynthesis; adenosylcobalamin from cob(II)yrinate a,c-diamide: step 7/7. In terms of biological role, joins adenosylcobinamide-GDP and alpha-ribazole to generate adenosylcobalamin (Ado-cobalamin). Also synthesizes adenosylcobalamin 5'-phosphate from adenosylcobinamide-GDP and alpha-ribazole 5'-phosphate. This is Adenosylcobinamide-GDP ribazoletransferase from Shewanella piezotolerans (strain WP3 / JCM 13877).